Reading from the N-terminus, the 602-residue chain is Probable translation initiation factor IF-2 (602 aa).

The tr-type G domain occupies 10-227 (LRQPIVVVLG…LLAGLTQNYM (218 aa)). The G1 stretch occupies residues 19 to 26 (GHVDHGKT). 19–26 (GHVDHGKT) serves as a coordination point for GTP. Positions 44 to 48 (EMTQE) are G2. The segment at 83–86 (DTPG) is G3. GTP contacts are provided by residues 83–87 (DTPGH) and 137–140 (NKID). Residues 137 to 140 (NKID) form a G4 region. Residues 205–207 (SAK) form a G5 region.

Belongs to the TRAFAC class translation factor GTPase superfamily. Classic translation factor GTPase family. IF-2 subfamily.

Functionally, function in general translation initiation by promoting the binding of the formylmethionine-tRNA to ribosomes. Seems to function along with eIF-2. This chain is Probable translation initiation factor IF-2, found in Sulfurisphaera tokodaii (strain DSM 16993 / JCM 10545 / NBRC 100140 / 7) (Sulfolobus tokodaii).